A 425-amino-acid chain; its full sequence is Protein CLP1 homolog (425 aa).

ATP contacts are provided by residues E18, K59, and 121 to 126; that span reads DVGKST.

It belongs to the Clp1 family. Clp1 subfamily.

The protein resides in the nucleus. Required for endonucleolytic cleavage during polyadenylation-dependent pre-mRNA 3'-end formation. This Drosophila pseudoobscura pseudoobscura (Fruit fly) protein is Protein CLP1 homolog (cbc).